Here is a 66-residue protein sequence, read N- to C-terminus: MPKMKTHRGSAKRFKKTGSGKLKRSHAYTSHLFANKSQKQKRKLRKSAVVSAGDFKRIKQMLANIK.

Positions 1-26 (MPKMKTHRGSAKRFKKTGSGKLKRSH) are enriched in basic residues. Residues 1–48 (MPKMKTHRGSAKRFKKTGSGKLKRSHAYTSHLFANKSQKQKRKLRKSA) are disordered.

The protein belongs to the bacterial ribosomal protein bL35 family. As to quaternary structure, part of the 50S ribosomal subunit.

The protein is Large ribosomal subunit protein bL35 of Bacillus subtilis (strain 168).